Consider the following 133-residue polypeptide: Maturin (133 aa).

Belongs to the MTURN family.

The protein resides in the cytoplasm. May be involved in early neuronal development. May play a role in promoting megakaryocyte differentiation. The sequence is that of Maturin (mturn) from Danio rerio (Zebrafish).